A 689-amino-acid polypeptide reads, in one-letter code: DNA ligase (689 aa).

NAD(+) is bound by residues 40–44 (DSEYD), 89–90 (SL), and Glu-121. Lys-123 functions as the N6-AMP-lysine intermediate in the catalytic mechanism. Residues Arg-144, Glu-179, Lys-295, and Lys-319 each coordinate NAD(+). Residues Cys-413, Cys-416, Cys-431, and Cys-437 each coordinate Zn(2+). One can recognise a BRCT domain in the interval 610-689 (REQSSLTDKI…EEWLTLIKNV (80 aa)).

Belongs to the NAD-dependent DNA ligase family. LigA subfamily. Requires Mg(2+) as cofactor. The cofactor is Mn(2+).

It carries out the reaction NAD(+) + (deoxyribonucleotide)n-3'-hydroxyl + 5'-phospho-(deoxyribonucleotide)m = (deoxyribonucleotide)n+m + AMP + beta-nicotinamide D-nucleotide.. DNA ligase that catalyzes the formation of phosphodiester linkages between 5'-phosphoryl and 3'-hydroxyl groups in double-stranded DNA using NAD as a coenzyme and as the energy source for the reaction. It is essential for DNA replication and repair of damaged DNA. The polypeptide is DNA ligase (Rickettsia massiliae (strain Mtu5)).